The sequence spans 513 residues: ATP synthase subunit alpha 2 (513 aa).

Residue 169–176 participates in ATP binding; the sequence is GDRQCGKT.

The protein belongs to the ATPase alpha/beta chains family. In terms of assembly, F-type ATPases have 2 components, CF(1) - the catalytic core - and CF(0) - the membrane proton channel. CF(1) has five subunits: alpha(3), beta(3), gamma(1), delta(1), epsilon(1). CF(0) has three main subunits: a(1), b(2) and c(9-12). The alpha and beta chains form an alternating ring which encloses part of the gamma chain. CF(1) is attached to CF(0) by a central stalk formed by the gamma and epsilon chains, while a peripheral stalk is formed by the delta and b chains.

Its subcellular location is the cell inner membrane. It catalyses the reaction ATP + H2O + 4 H(+)(in) = ADP + phosphate + 5 H(+)(out). Produces ATP from ADP in the presence of a proton gradient across the membrane. The alpha chain is a regulatory subunit. In Paraburkholderia xenovorans (strain LB400), this protein is ATP synthase subunit alpha 2.